The sequence spans 518 residues: ATP synthase subunit alpha (518 aa).

169-176 provides a ligand contact to ATP; that stretch reads GDRKTGKT.

The protein belongs to the ATPase alpha/beta chains family. F-type ATPases have 2 components, CF(1) - the catalytic core - and CF(0) - the membrane proton channel. CF(1) has five subunits: alpha(3), beta(3), gamma(1), delta(1), epsilon(1). CF(0) has three main subunits: a(1), b(2) and c(9-12). The alpha and beta chains form an alternating ring which encloses part of the gamma chain. CF(1) is attached to CF(0) by a central stalk formed by the gamma and epsilon chains, while a peripheral stalk is formed by the delta and b chains.

Its subcellular location is the cell membrane. The catalysed reaction is ATP + H2O + 4 H(+)(in) = ADP + phosphate + 5 H(+)(out). Produces ATP from ADP in the presence of a proton gradient across the membrane. The alpha chain is a regulatory subunit. This is ATP synthase subunit alpha from Enterococcus hirae (strain ATCC 9790 / DSM 20160 / JCM 8729 / LMG 6399 / NBRC 3181 / NCIMB 6459 / NCDO 1258 / NCTC 12367 / WDCM 00089 / R).